Here is a 452-residue protein sequence, read N- to C-terminus: Retinoid-inducible serine carboxypeptidase (452 aa).

Positions 1-26 (MELALRRSPVPRWLLLLPLLLGLNAG) are cleaved as a signal peptide. Residues N64 and N126 are each glycosylated (N-linked (GlcNAc...) asparagine). The active site involves S167. An N-linked (GlcNAc...) asparagine glycan is attached at N362. Residues D371 and H431 contribute to the active site.

Belongs to the peptidase S10 family.

It localises to the secreted. In terms of biological role, may be involved in vascular wall and kidney homeostasis. This Homo sapiens (Human) protein is Retinoid-inducible serine carboxypeptidase (SCPEP1).